Consider the following 401-residue polypeptide: Argininosuccinate synthase (401 aa).

ATP-binding positions include 11 to 19 and Ala38; that span reads AYSGGLDTS. L-citrulline contacts are provided by Tyr89 and Ser94. Position 119 (Gly119) interacts with ATP. Thr121, Asn125, and Asp126 together coordinate L-aspartate. Residue Asn125 coordinates L-citrulline. Residues Arg129, Ser180, Ser189, Glu265, and Tyr277 each contribute to the L-citrulline site.

This sequence belongs to the argininosuccinate synthase family. Type 1 subfamily. Homotetramer.

The protein resides in the cytoplasm. It carries out the reaction L-citrulline + L-aspartate + ATP = 2-(N(omega)-L-arginino)succinate + AMP + diphosphate + H(+). It functions in the pathway amino-acid biosynthesis; L-arginine biosynthesis; L-arginine from L-ornithine and carbamoyl phosphate: step 2/3. The protein is Argininosuccinate synthase of Syntrophus aciditrophicus (strain SB).